A 429-amino-acid polypeptide reads, in one-letter code: Endoglucanase A (429 aa).

An N-terminal signal peptide occupies residues M1–R34. Positions A46–E94 are enriched in basic and acidic residues. Residues A46–P100 form a disordered region. The Proton donor role is filled by E249. The active-site Nucleophile is the E334.

The protein belongs to the glycosyl hydrolase 5 (cellulase A) family.

The enzyme catalyses Endohydrolysis of (1-&gt;4)-beta-D-glucosidic linkages in cellulose, lichenin and cereal beta-D-glucans.. The polypeptide is Endoglucanase A (celA) (Butyrivibrio fibrisolvens).